The sequence spans 374 residues: Lipopolysaccharide glucosyltransferase WaaG (374 aa).

UDP-alpha-D-glucose contacts are provided by G15 and D19. A membrane-interacting region region spans residues 103-132 (YAEKVAQEKGFLYRLTSRYRHYAAFERATF). UDP-alpha-D-glucose-binding residues include R173, R208, K209, R261, E281, A283, G284, I285, V286, and E289.

Belongs to the glycosyltransferase group 1 family. Glycosyltransferase 4 subfamily.

The protein localises to the cell inner membrane. It participates in bacterial outer membrane biogenesis; LPS core biosynthesis. Inhibited by divalent metal ions such as Mg(2+), Mn(2+), Ca(2+), Zn(2+), Co(2+), Ni(2+) and Cu(2+). Its function is as follows. Glucosyltransferase involved in the biosynthesis of the core oligosaccharide region of lipopolysaccharide (LPS). Catalyzes the addition of the first outer-core glucose from UDP-glucose to the inner-core heptose II. Cannot use other sugar donors, such as UDP-galactose, UDP-glucuronic acid, UDP-galacuronic acid, GDP-mannose, ADP-glucose and GDP-glucose. In the absence of a lipid acceptor, can slowly hydrolyze UDP-glucose. This is Lipopolysaccharide glucosyltransferase WaaG from Escherichia coli (strain K12).